The following is a 199-amino-acid chain: dITP/XTP pyrophosphatase (199 aa).

A substrate-binding site is contributed by 8–13; sequence TSNINK. D68 functions as the Proton acceptor in the catalytic mechanism. D68 is a binding site for Mg(2+). Substrate contacts are provided by residues S69, 155–158, K177, and 182–183; these read FGYD and HR.

Belongs to the HAM1 NTPase family. As to quaternary structure, homodimer. Mg(2+) serves as cofactor.

The catalysed reaction is XTP + H2O = XMP + diphosphate + H(+). The enzyme catalyses dITP + H2O = dIMP + diphosphate + H(+). It catalyses the reaction ITP + H2O = IMP + diphosphate + H(+). Its function is as follows. Pyrophosphatase that catalyzes the hydrolysis of nucleoside triphosphates to their monophosphate derivatives, with a high preference for the non-canonical purine nucleotides XTP (xanthosine triphosphate), dITP (deoxyinosine triphosphate) and ITP. Seems to function as a house-cleaning enzyme that removes non-canonical purine nucleotides from the nucleotide pool, thus preventing their incorporation into DNA/RNA and avoiding chromosomal lesions. The protein is dITP/XTP pyrophosphatase of Borrelia duttonii (strain Ly).